The chain runs to 238 residues: Ribose-5-phosphate isomerase A (238 aa).

Substrate-binding positions include 30 to 33 (SGST), 87 to 90 (DGAD), and 100 to 103 (KGGG). Residue Glu109 is the Proton acceptor of the active site. A substrate-binding site is contributed by Lys127.

This sequence belongs to the ribose 5-phosphate isomerase family. In terms of assembly, homodimer.

It catalyses the reaction aldehydo-D-ribose 5-phosphate = D-ribulose 5-phosphate. The protein operates within carbohydrate degradation; pentose phosphate pathway; D-ribose 5-phosphate from D-ribulose 5-phosphate (non-oxidative stage): step 1/1. Functionally, catalyzes the reversible conversion of ribose-5-phosphate to ribulose 5-phosphate. In Synechococcus sp. (strain CC9311), this protein is Ribose-5-phosphate isomerase A.